We begin with the raw amino-acid sequence, 178 residues long: Ribosome maturation factor RimM (178 aa).

The 81-residue stretch at 94 to 174 folds into the PRC barrel domain; that stretch reads KNEFFWFDLI…RIDVINSFDI (81 aa).

Belongs to the RimM family. Binds ribosomal protein uS19.

The protein localises to the cytoplasm. In terms of biological role, an accessory protein needed during the final step in the assembly of 30S ribosomal subunit, possibly for assembly of the head region. Essential for efficient processing of 16S rRNA. May be needed both before and after RbfA during the maturation of 16S rRNA. It has affinity for free ribosomal 30S subunits but not for 70S ribosomes. The protein is Ribosome maturation factor RimM of Aliarcobacter butzleri (strain RM4018) (Arcobacter butzleri).